The sequence spans 155 residues: Small ribosomal subunit protein uS7c (155 aa).

The protein belongs to the universal ribosomal protein uS7 family. In terms of assembly, part of the 30S ribosomal subunit.

The protein localises to the plastid. It is found in the chloroplast. One of the primary rRNA binding proteins, it binds directly to 16S rRNA where it nucleates assembly of the head domain of the 30S subunit. The protein is Small ribosomal subunit protein uS7c (rps7) of Aristolochia macrophylla (Dutchman's pipe vine).